The chain runs to 837 residues: Phenylalanine--tRNA ligase beta subunit (837 aa).

A tRNA-binding domain is found at Ser-39–Gly-149. Residues Ile-415–Ser-520 form the B5 domain. The Mg(2+) site is built by Asp-498, Asp-504, Glu-507, and Glu-508. The FDX-ACB domain occupies Pro-743–Arg-836.

The protein belongs to the phenylalanyl-tRNA synthetase beta subunit family. Type 1 subfamily. In terms of assembly, tetramer of two alpha and two beta subunits. Mg(2+) serves as cofactor.

Its subcellular location is the cytoplasm. It catalyses the reaction tRNA(Phe) + L-phenylalanine + ATP = L-phenylalanyl-tRNA(Phe) + AMP + diphosphate + H(+). The sequence is that of Phenylalanine--tRNA ligase beta subunit from Prochlorococcus marinus (strain SARG / CCMP1375 / SS120).